The sequence spans 530 residues: Glucose-6-phosphate isomerase (530 aa).

Catalysis depends on Glu-347, which acts as the Proton donor. Residues His-378 and Lys-493 contribute to the active site.

Belongs to the GPI family.

It is found in the cytoplasm. The enzyme catalyses alpha-D-glucose 6-phosphate = beta-D-fructose 6-phosphate. It functions in the pathway carbohydrate biosynthesis; gluconeogenesis. The protein operates within carbohydrate degradation; glycolysis; D-glyceraldehyde 3-phosphate and glycerone phosphate from D-glucose: step 2/4. Catalyzes the reversible isomerization of glucose-6-phosphate to fructose-6-phosphate. The polypeptide is Glucose-6-phosphate isomerase (Chlamydia abortus (strain DSM 27085 / S26/3) (Chlamydophila abortus)).